A 448-amino-acid chain; its full sequence is Adenylosuccinate synthetase (448 aa).

Residues 36–42 and 64–66 each bind GTP; these read GDEGKGK and GHT. The Proton acceptor role is filled by Asp-37. 2 residues coordinate Mg(2+): Asp-37 and Gly-64. Residues 37–40, 62–65, Thr-154, Arg-168, Asn-246, Thr-261, and Arg-325 contribute to the IMP site; these read DEGK and NAGH. The Proton donor role is filled by His-65. 321 to 327 provides a ligand contact to substrate; that stretch reads VTTKRKR. GTP is bound by residues Arg-327, 353–355, and 436–438; these read KLD and GVG.

Belongs to the adenylosuccinate synthetase family. In terms of assembly, homodimer. Mg(2+) is required as a cofactor.

Its subcellular location is the cytoplasm. The enzyme catalyses IMP + L-aspartate + GTP = N(6)-(1,2-dicarboxyethyl)-AMP + GDP + phosphate + 2 H(+). Its pathway is purine metabolism; AMP biosynthesis via de novo pathway; AMP from IMP: step 1/2. Plays an important role in the de novo pathway and in the salvage pathway of purine nucleotide biosynthesis. Catalyzes the first committed step in the biosynthesis of AMP from IMP. The sequence is that of Adenylosuccinate synthetase from Drosophila persimilis (Fruit fly).